Reading from the N-terminus, the 140-residue chain is uncharacterized protein (140 aa).

The protein belongs to the SufE family.

This is an uncharacterized protein from Rhizobium meliloti (strain 1021) (Ensifer meliloti).